Here is a 43-residue protein sequence, read N- to C-terminus: Delta/kappa-actitoxin-Avd4a (43 aa).

Intrachain disulfides connect C4-C39, C6-C32, and C22-C40.

This sequence belongs to the sea anemone type 3 (BDS) potassium channel toxin family.

The protein resides in the secreted. It localises to the nematocyst. Its function is as follows. Acts as a gating modifier on both Kv and Nav ion channels, and also acts on blood pressure. Voltage-dependently inhibits voltage-gated potassium channels Kv3 (Kv3.1/KCNC1, Kv3.2/KCNC2 and Kv3.4/KCNC4) and slows inactivation of the voltage-gated sodium channel Nav1.7/SCN9A. Inhibits all Kv3.1, Kv3.2 and Kv3.4 by about 50% when tested at a voltage of +40 mV (45%, 48% and 56%, respectively). May act by binding residues in voltage-sensing domains S3b and S4 of Kv3. On sodium channel, tests have been done on human Nav1.7/SCN9A (expressed in HEK293 cells) (EC(50)=3 nM) and rat SCG neurons that mostly carry Nav1.7 channels (EC(50)=300 nM). This toxin also reduces blood pressure. This is Delta/kappa-actitoxin-Avd4a from Anemonia sulcata (Mediterranean snakelocks sea anemone).